Consider the following 88-residue polypeptide: Putative regulatory protein PCC7424_3427 (88 aa).

The protein belongs to the RemA family.

The polypeptide is Putative regulatory protein PCC7424_3427 (Gloeothece citriformis (strain PCC 7424) (Cyanothece sp. (strain PCC 7424))).